Consider the following 30-residue polypeptide: Unknown protein from spot 365 of 2D-PAGE of etiolated coleoptile (30 aa).

It belongs to the zinc-containing alcohol dehydrogenase family.

The sequence is that of Unknown protein from spot 365 of 2D-PAGE of etiolated coleoptile from Zea mays (Maize).